The primary structure comprises 518 residues: Glutamate--cysteine ligase (518 aa).

The protein belongs to the glutamate--cysteine ligase type 1 family. Type 1 subfamily.

It catalyses the reaction L-cysteine + L-glutamate + ATP = gamma-L-glutamyl-L-cysteine + ADP + phosphate + H(+). Its pathway is sulfur metabolism; glutathione biosynthesis; glutathione from L-cysteine and L-glutamate: step 1/2. In Escherichia coli O127:H6 (strain E2348/69 / EPEC), this protein is Glutamate--cysteine ligase.